Consider the following 492-residue polypeptide: Probable ATP-citrate synthase subunit 2 (492 aa).

Ser24 bears the Phosphoserine mark.

This sequence in the N-terminal section; belongs to the succinate/malate CoA ligase beta subunit family. In the C-terminal section; belongs to the succinate/malate CoA ligase alpha subunit family. Composed of two subunits.

It is found in the cytoplasm. It localises to the nucleus. The enzyme catalyses oxaloacetate + acetyl-CoA + ADP + phosphate = citrate + ATP + CoA. ATP citrate-lyase is the primary enzyme responsible for the synthesis of cytosolic acetyl-CoA. Has a central role in de novo lipid synthesis. The chain is Probable ATP-citrate synthase subunit 2 from Schizosaccharomyces pombe (strain 972 / ATCC 24843) (Fission yeast).